A 926-amino-acid polypeptide reads, in one-letter code: Protein transport protein SEC24-2 (926 aa).

Positions 1–54 are disordered; sequence MSHHKKRVYPQAQAQYGQSATPLQQPAQLVPPQDPAAAGMSYAQMGMPPQGAAA. Low complexity predominate over residues 20–54; that stretch reads ATPLQQPAQLVPPQDPAAAGMSYAQMGMPPQGAAA. 4 residues coordinate Zn(2+): cysteine 231, cysteine 234, cysteine 253, and cysteine 256. The interval 231–256 is zinc finger-like; it reads CRRCRSYMNPFITFIEQGRRWRCNFC.

Belongs to the SEC23/SEC24 family. SEC24 subfamily. The COPII coat is composed of at least 5 proteins: the SEC23/24 complex, the SEC13/31 complex, and the protein SAR1. Golgi apparatus membrane; Peripheral membrane protein; Cytoplasmic side.

The protein resides in the cytoplasm. Its subcellular location is the cytoplasmic vesicle. It is found in the COPII-coated vesicle membrane. The protein localises to the endoplasmic reticulum membrane. It localises to the golgi apparatus membrane. Component of the coat protein complex II (COPII) which promotes the formation of transport vesicles from the endoplasmic reticulum (ER). The coat has two main functions, the physical deformation of the endoplasmic reticulum membrane into vesicles and the selection of cargo molecules. The protein is Protein transport protein SEC24-2 (SEC242) of Saccharomyces uvarum (strain ATCC 76518 / CBS 7001 / CLIB 283 / NBRC 10550 / MCYC 623 / NCYC 2669 / NRRL Y-11845) (Yeast).